A 141-amino-acid chain; its full sequence is Heavy metal-associated isoprenylated plant protein 29 (141 aa).

An HMA domain is found at 1 to 59 (MEVPMDCPGCENKVRKALEKMNGVHDVQIDIKQQRVTVTGSAEQKKVLKVARNVTKRDI). A metal cation contacts are provided by Cys-7 and Cys-10. Cys-138 carries the cysteine methyl ester modification. The S-farnesyl cysteine moiety is linked to residue Cys-138. Residues 139-141 (SIM) constitute a propeptide, removed in mature form.

This sequence belongs to the HIPP family.

Heavy-metal-binding protein. The chain is Heavy metal-associated isoprenylated plant protein 29 from Arabidopsis thaliana (Mouse-ear cress).